The sequence spans 306 residues: MPFLELTLSCSEVTLPRFQNALDDVGALAVTMLDADADTSNERAILEPGVGEMPLWDRLTMTALFDGDSDALVVLAALEAFDPGLDWSQVAFRMVEDSDWERAWMDLFKPMQFGERTFIVPWNHALPEAADTPEAAVVRLDPGLAFGSGTHQTTALCLRWLDSLAGSGELQGRSVLDFGCGSGILAVAALKLGAAGAVGVDNDPQALLATADNAQRNGVDAQLTVYMPQDEPVQTYQVVVANILASALDALADTLAARVAPGGRIALSGILHGQEDDLLKRYAPWFDQLRCERDEDWMRIDGVRRG.

Residues Thr-154, Gly-179, Asp-201, and Asn-242 each coordinate S-adenosyl-L-methionine.

Belongs to the methyltransferase superfamily. PrmA family.

The protein localises to the cytoplasm. It catalyses the reaction L-lysyl-[protein] + 3 S-adenosyl-L-methionine = N(6),N(6),N(6)-trimethyl-L-lysyl-[protein] + 3 S-adenosyl-L-homocysteine + 3 H(+). Methylates ribosomal protein L11. The polypeptide is Ribosomal protein L11 methyltransferase (Xanthomonas euvesicatoria pv. vesicatoria (strain 85-10) (Xanthomonas campestris pv. vesicatoria)).